The chain runs to 260 residues: Indole-3-glycerol phosphate synthase (260 aa).

This sequence belongs to the TrpC family.

It catalyses the reaction 1-(2-carboxyphenylamino)-1-deoxy-D-ribulose 5-phosphate + H(+) = (1S,2R)-1-C-(indol-3-yl)glycerol 3-phosphate + CO2 + H2O. Its pathway is amino-acid biosynthesis; L-tryptophan biosynthesis; L-tryptophan from chorismate: step 4/5. This is Indole-3-glycerol phosphate synthase from Acetivibrio thermocellus (strain ATCC 27405 / DSM 1237 / JCM 9322 / NBRC 103400 / NCIMB 10682 / NRRL B-4536 / VPI 7372) (Clostridium thermocellum).